The primary structure comprises 342 residues: Tetraacyldisaccharide 4'-kinase (342 aa).

ATP is bound at residue 68 to 75 (TVGGTGKT).

It belongs to the LpxK family.

It catalyses the reaction a lipid A disaccharide + ATP = a lipid IVA + ADP + H(+). It functions in the pathway glycolipid biosynthesis; lipid IV(A) biosynthesis; lipid IV(A) from (3R)-3-hydroxytetradecanoyl-[acyl-carrier-protein] and UDP-N-acetyl-alpha-D-glucosamine: step 6/6. Transfers the gamma-phosphate of ATP to the 4'-position of a tetraacyldisaccharide 1-phosphate intermediate (termed DS-1-P) to form tetraacyldisaccharide 1,4'-bis-phosphate (lipid IVA). This chain is Tetraacyldisaccharide 4'-kinase, found in Burkholderia cenocepacia (strain HI2424).